The chain runs to 198 residues: Nucleoid occlusion factor SlmA (198 aa).

The 61-residue stretch at 10–70 (NRREEILQSL…SLIEFIEDSL (61 aa)) folds into the HTH tetR-type domain. The H-T-H motif DNA-binding region spans 33 to 52 (TTAKLAASVGVSEAALYRHF). Residues 117-144 (EQDRLQGRINQLFERIEAQLRQVLREKR) adopt a coiled-coil conformation.

Belongs to the nucleoid occlusion factor SlmA family. Homodimer. Interacts with FtsZ.

Its subcellular location is the cytoplasm. It is found in the nucleoid. In terms of biological role, required for nucleoid occlusion (NO) phenomenon, which prevents Z-ring formation and cell division over the nucleoid. Acts as a DNA-associated cell division inhibitor that binds simultaneously chromosomal DNA and FtsZ, and disrupts the assembly of FtsZ polymers. SlmA-DNA-binding sequences (SBS) are dispersed on non-Ter regions of the chromosome, preventing FtsZ polymerization at these regions. This is Nucleoid occlusion factor SlmA from Escherichia coli (strain 55989 / EAEC).